The sequence spans 52 residues: MKVTCVLTLAVLILTVGQMVTADCRSPGSWCFYKHSNCCSGNCFLWCVQNGK.

The N-terminal stretch at 1–22 is a signal peptide; sequence MKVTCVLTLAVLILTVGQMVTA. Cystine bridges form between cysteine 24-cysteine 39, cysteine 31-cysteine 43, and cysteine 38-cysteine 47.

As to expression, expressed by the venom duct.

Its subcellular location is the secreted. In terms of biological role, probable neurotoxin. The polypeptide is Conotoxin Cal6.36 (Californiconus californicus (California cone)).